The primary structure comprises 125 residues: Large ribosomal subunit protein bL12 (125 aa).

This sequence belongs to the bacterial ribosomal protein bL12 family. Homodimer. Part of the ribosomal stalk of the 50S ribosomal subunit. Forms a multimeric L10(L12)X complex, where L10 forms an elongated spine to which 2 to 4 L12 dimers bind in a sequential fashion. Binds GTP-bound translation factors.

In terms of biological role, forms part of the ribosomal stalk which helps the ribosome interact with GTP-bound translation factors. Is thus essential for accurate translation. This Caldanaerobacter subterraneus subsp. tengcongensis (strain DSM 15242 / JCM 11007 / NBRC 100824 / MB4) (Thermoanaerobacter tengcongensis) protein is Large ribosomal subunit protein bL12.